Reading from the N-terminus, the 1361-residue chain is DNA-directed RNA polymerase subunit beta (1361 aa).

It belongs to the RNA polymerase beta chain family. In terms of assembly, the RNAP catalytic core consists of 2 alpha, 1 beta, 1 beta' and 1 omega subunit. When a sigma factor is associated with the core the holoenzyme is formed, which can initiate transcription.

It carries out the reaction RNA(n) + a ribonucleoside 5'-triphosphate = RNA(n+1) + diphosphate. DNA-dependent RNA polymerase catalyzes the transcription of DNA into RNA using the four ribonucleoside triphosphates as substrates. This Dichelobacter nodosus (strain VCS1703A) protein is DNA-directed RNA polymerase subunit beta.